The following is an 87-amino-acid chain: Mitotic-spindle organizing protein 1 (87 aa).

Belongs to the MOZART1 family. As to quaternary structure, part of the gamma-tubulin complex.

It is found in the cytoplasm. Its subcellular location is the cytoskeleton. The protein resides in the microtubule organizing center. The protein localises to the spindle pole body. Functionally, required for gamma-tubulin complex recruitment to the microtubule organizing center (MTOC). In Chaetomium globosum (strain ATCC 6205 / CBS 148.51 / DSM 1962 / NBRC 6347 / NRRL 1970) (Soil fungus), this protein is Mitotic-spindle organizing protein 1.